Reading from the N-terminus, the 518-residue chain is Ent-cassadiene hydroxylase (518 aa).

Residues 6 to 26 (LILALGLSVLFVLLSKLVSSA) form a helical membrane-spanning segment. Residue cysteine 451 participates in heme binding.

Belongs to the cytochrome P450 family. It depends on heme as a cofactor.

It localises to the membrane. It carries out the reaction ent-cassa-12,15-diene + 3 reduced [NADPH--hemoprotein reductase] + 3 O2 = ent-3beta-hydroxycassa-12,15-dien-2-one + 3 oxidized [NADPH--hemoprotein reductase] + 4 H2O + 3 H(+). Functionally, enzyme of the diterpenoid metabolism involved in the biosynthesis of antibacterial oryzalides such as phytocassane. Catalyzes the hydroxylation of ent-cassa-12,15-diene to form ent-3beta-hydroxycassa-12,15-dien-2-one. The chain is Ent-cassadiene hydroxylase (CYP71Z7) from Oryza sativa subsp. japonica (Rice).